A 133-amino-acid chain; its full sequence is Small ribosomal subunit protein uS8 (133 aa).

It belongs to the universal ribosomal protein uS8 family. Part of the 30S ribosomal subunit. Contacts proteins S5 and S12.

One of the primary rRNA binding proteins, it binds directly to 16S rRNA central domain where it helps coordinate assembly of the platform of the 30S subunit. The protein is Small ribosomal subunit protein uS8 of Chloroflexus aurantiacus (strain ATCC 29364 / DSM 637 / Y-400-fl).